The primary structure comprises 408 residues: S-adenosylmethionine sensor upstream of mTORC1 (408 aa).

Residues 1 to 16 (MEAAPRSRPRPGGAAA) are compositionally biased toward low complexity. The interval 1–37 (MEAAPRSRPRPGGAAASPPPPPPPPPPEQERKLEQEK) is disordered. Residues 17 to 27 (SPPPPPPPPPP) are compositionally biased toward pro residues. The span at 28–37 (EQERKLEQEK) shows a compositional bias: basic and acidic residues. S-adenosyl-L-methionine contacts are provided by arginine 97, glycine 175, aspartate 193, aspartate 205, phenylalanine 206, and serine 247.

The protein belongs to the BMT2/SAMTOR family. As to quaternary structure, interacts with the GATOR1 complex; interaction is disrupted when SAMTOR binds S-adenosyl-L-methionine. Interacts with the KICSTOR complex; interaction is disrupted when SAMTOR binds S-adenosyl-L-methionine.

In terms of biological role, S-adenosyl-L-methionine-binding protein that acts as an inhibitor of mTORC1 signaling via interaction with the GATOR1 and KICSTOR complexes. Acts as a sensor of S-adenosyl-L-methionine to signal methionine sufficiency to mTORC1: in presence of methionine, binds S-adenosyl-L-methionine, leading to disrupt interaction with the GATOR1 and KICSTOR complexes and promote mTORC1 signaling. Upon methionine starvation, S-adenosyl-L-methionine levels are reduced, thereby promoting the association with GATOR1 and KICSTOR, leading to inhibit mTORC1 signaling. Probably also acts as a S-adenosyl-L-methionine-dependent methyltransferase. In Gallus gallus (Chicken), this protein is S-adenosylmethionine sensor upstream of mTORC1.